Consider the following 393-residue polypeptide: Formate-dependent phosphoribosylglycinamide formyltransferase (393 aa).

N(1)-(5-phospho-beta-D-ribosyl)glycinamide-binding positions include 22–23 (EL) and Glu82. ATP-binding positions include Arg114, Lys155, 160–165 (SSGKGQ), 195–198 (EGFV), and Glu203. The ATP-grasp domain occupies 119 to 308 (RLAAEDLGIP…EFALHLRAIL (190 aa)). Mg(2+) contacts are provided by Glu267 and Glu279. N(1)-(5-phospho-beta-D-ribosyl)glycinamide is bound by residues Asp286, Lys356, and 363-364 (RR).

The protein belongs to the PurK/PurT family. As to quaternary structure, homodimer.

The enzyme catalyses N(1)-(5-phospho-beta-D-ribosyl)glycinamide + formate + ATP = N(2)-formyl-N(1)-(5-phospho-beta-D-ribosyl)glycinamide + ADP + phosphate + H(+). The protein operates within purine metabolism; IMP biosynthesis via de novo pathway; N(2)-formyl-N(1)-(5-phospho-D-ribosyl)glycinamide from N(1)-(5-phospho-D-ribosyl)glycinamide (formate route): step 1/1. Its function is as follows. Involved in the de novo purine biosynthesis. Catalyzes the transfer of formate to 5-phospho-ribosyl-glycinamide (GAR), producing 5-phospho-ribosyl-N-formylglycinamide (FGAR). Formate is provided by PurU via hydrolysis of 10-formyl-tetrahydrofolate. This chain is Formate-dependent phosphoribosylglycinamide formyltransferase, found in Hydrogenovibrio crunogenus (strain DSM 25203 / XCL-2) (Thiomicrospira crunogena).